Reading from the N-terminus, the 411-residue chain is MAHPLDLNQLAQHIKQWGQSLGFQQVGICDTDLTAEEPRLQAWLDKQYHGEMAWMARHGMLRARPHELLPGTLRVISVRMNYLPAKAAFASTLNNPELGYVSRYALGRDYHKLLRQRLKKLGDQIQHYCLEQNNLDRHDLELHDLEQHDSERQGQPEQHTASEINFRPFVDSAPIMERSLAAKAGIGWVGKHSLILNRDAGSWFFLGELLIDLPLPVDKPQEEQCGRCVACMTTCPTGAIVAPYTVDARRCISYLTIELEGAIPEEFRPLMGNRIYGCDDCQLICPWNRFSQLTDEDDFSPRAVLHTPQLLDLFAWNEEKFLRVTEGSAIRRIGHLRWLRNISVALGNAPYLDSIVLALETRRGLHPMLDEHIEWAISQQLARRATQAVEVQLPQKKRLIRAIEKGLPRDA.

D171 acts as the Proton donor in catalysis. Positions 213 to 245 constitute a 4Fe-4S ferredoxin-type domain; sequence LPLPVDKPQEEQCGRCVACMTTCPTGAIVAPYT. Residues C225, C228, C231, C235, C251, C278, C281, and C285 each contribute to the [4Fe-4S] cluster site.

Belongs to the QueG family. Monomer. The cofactor is cob(II)alamin. [4Fe-4S] cluster is required as a cofactor.

Its subcellular location is the cytoplasm. The catalysed reaction is epoxyqueuosine(34) in tRNA + AH2 = queuosine(34) in tRNA + A + H2O. It functions in the pathway tRNA modification; tRNA-queuosine biosynthesis. Its function is as follows. Catalyzes the conversion of epoxyqueuosine (oQ) to queuosine (Q), which is a hypermodified base found in the wobble positions of tRNA(Asp), tRNA(Asn), tRNA(His) and tRNA(Tyr). The protein is Epoxyqueuosine reductase of Yersinia pestis.